We begin with the raw amino-acid sequence, 517 residues long: Glucose-6-phosphate isomerase (517 aa).

Catalysis depends on glutamate 345, which acts as the Proton donor. Catalysis depends on residues histidine 376 and lysine 490.

This sequence belongs to the GPI family.

Its subcellular location is the cytoplasm. It carries out the reaction alpha-D-glucose 6-phosphate = beta-D-fructose 6-phosphate. Its pathway is carbohydrate biosynthesis; gluconeogenesis. It participates in carbohydrate degradation; glycolysis; D-glyceraldehyde 3-phosphate and glycerone phosphate from D-glucose: step 2/4. Its function is as follows. Catalyzes the reversible isomerization of glucose-6-phosphate to fructose-6-phosphate. This Erythrobacter litoralis (strain HTCC2594) protein is Glucose-6-phosphate isomerase.